Consider the following 688-residue polypeptide: uncharacterized protein (688 aa).

This is an uncharacterized protein from Saccharomyces cerevisiae (strain ATCC 204508 / S288c) (Baker's yeast).